The primary structure comprises 874 residues: uncharacterized protein (874 aa).

This is an uncharacterized protein from Ostreid herpesvirus 1 (isolate France) (OsHV-1).